The following is an 874-amino-acid chain: Valine--tRNA ligase (874 aa).

The 'HIGH' region signature appears at 42–52; that stretch reads PNITGRIHIGH. Positions 522 to 526 match the 'KMSKS' region motif; the sequence is KMSKS. Lys525 provides a ligand contact to ATP. Residues 806 to 874 are a coiled coil; the sequence is DYIDIDTEKQ…KLQALLKEIS (69 aa).

This sequence belongs to the class-I aminoacyl-tRNA synthetase family. ValS type 1 subfamily. In terms of assembly, monomer.

It localises to the cytoplasm. The catalysed reaction is tRNA(Val) + L-valine + ATP = L-valyl-tRNA(Val) + AMP + diphosphate. In terms of biological role, catalyzes the attachment of valine to tRNA(Val). As ValRS can inadvertently accommodate and process structurally similar amino acids such as threonine, to avoid such errors, it has a 'posttransfer' editing activity that hydrolyzes mischarged Thr-tRNA(Val) in a tRNA-dependent manner. The sequence is that of Valine--tRNA ligase from Petrotoga mobilis (strain DSM 10674 / SJ95).